Here is a 381-residue protein sequence, read N- to C-terminus: Creatine kinase M-type (381 aa).

In terms of domain architecture, Phosphagen kinase N-terminal spans 11-98 (KLNFKAEEEY…FDPIIQDRHG (88 aa)). A Phosphagen kinase C-terminal domain is found at 125-367 (YVLSSRVRTG…KLMVEMEKKL (243 aa)). 128–132 (SSRVR) contacts ATP. A Phosphoserine modification is found at serine 164. Threonine 166 carries the post-translational modification Phosphothreonine. Serine 178 is modified (phosphoserine). Threonine 180 carries the post-translational modification Phosphothreonine. Histidine 191 provides a ligand contact to ATP. The residue at position 199 (serine 199) is a Phosphoserine. Residues arginine 236 and arginine 292 each coordinate ATP. Threonine 313 and threonine 322 each carry phosphothreonine. Residues 320–325 (RGTGGV) and aspartate 335 contribute to the ATP site. At serine 372 the chain carries Phosphoserine.

This sequence belongs to the ATP:guanido phosphotransferase family. Dimer of identical or non-identical chains, which can be either B (brain type) or M (muscle type). With MM being the major form in skeletal muscle and myocardium, MB existing in myocardium, and BB existing in many tissues, especially brain.

The catalysed reaction is creatine + ATP = N-phosphocreatine + ADP + H(+). Reversibly catalyzes the transfer of phosphate between ATP and various phosphogens (e.g. creatine phosphate). Creatine kinase isoenzymes play a central role in energy transduction in tissues with large, fluctuating energy demands, such as skeletal muscle, heart, brain and spermatozoa. The chain is Creatine kinase M-type (CKM) from Sus scrofa (Pig).